The primary structure comprises 25 residues: Panurgine R (25 aa).

Disulfide bonds link Cys-8–Cys-23 and Cys-11–Cys-19.

It localises to the target cell membrane. The protein resides in the secreted. Its function is as follows. Antimicrobial peptide active against Gram-positive bacteria M.luteus (MIC=0.8 uM) and B.subtilis (MIC=1.5 uM). Less active against Gram-negative bacteria E.coli (MIC=32.5 uM) and yeast C.albicans (MIC=18.7 uM). Not active against S.aureus and P.aeruginosa. Has no hemolytic activity against human erythrocytes. Probably acts by disrupting membranes of target cells. This is Panurgine R from Panurgus calcaratus (Solitary bee).